Here is a 43-residue protein sequence, read N- to C-terminus: MADKPDISEVSQFDKTKLKKTETQEKNTLPTKETIEQEKQCEA.

2 stretches are compositionally biased toward basic and acidic residues: residues 1–25 and 33–43; these read MADKPDISEVSQFDKTKLKKTETQE and ETIEQEKQCEA. A disordered region spans residues 1–43; sequence MADKPDISEVSQFDKTKLKKTETQEKNTLPTKETIEQEKQCEA.

It belongs to the thymosin beta family.

It is found in the cytoplasm. It localises to the cytoskeleton. Functionally, plays an important role in the organization of the cytoskeleton. Binds to and sequesters actin monomers (G actin) and therefore inhibits actin polymerization. In Cyprinus carpio (Common carp), this protein is Thymosin beta-b.